The following is a 147-amino-acid chain: Large ribosomal subunit protein bL9 (147 aa).

Belongs to the bacterial ribosomal protein bL9 family.

Its function is as follows. Binds to the 23S rRNA. The sequence is that of Large ribosomal subunit protein bL9 from Phocaeicola vulgatus (strain ATCC 8482 / DSM 1447 / JCM 5826 / CCUG 4940 / NBRC 14291 / NCTC 11154) (Bacteroides vulgatus).